A 316-amino-acid chain; its full sequence is ATP synthase gamma chain (316 aa).

This sequence belongs to the ATPase gamma chain family. In terms of assembly, F-type ATPases have 2 components, CF(1) - the catalytic core - and CF(0) - the membrane proton channel. CF(1) has five subunits: alpha(3), beta(3), gamma(1), delta(1), epsilon(1). CF(0) has three main subunits: a, b and c.

It is found in the cellular thylakoid membrane. Produces ATP from ADP in the presence of a proton gradient across the membrane. The gamma chain is believed to be important in regulating ATPase activity and the flow of protons through the CF(0) complex. The protein is ATP synthase gamma chain of Synechococcus sp. (strain WH7803).